The sequence spans 297 residues: MTFQDIIMTLQKFWVEKGCILWQPYDIEVGAGTMNPATFLRVLGPEPWNVCYVEPSRRPKDGRYGENPNRLQHYYQFQVILKPTPENPHELYLESLQALGIDLTMHDIRFVEDDWESPTLGAWGLGWEVWLDGMEITQFTYFQQAGSLDLPEISVEITYGLERIATYLQGKDSVYDIVWAEGLTYGDIYKEAERQWSIHNFEVVDVDFLIKTFDMYEQEGYKLISLNLPIPAYDYALKCSHTFNLLDARGALSVNERARYIARVRNLARECAKAFVKHREELGYPLIKRRDDEVLST.

This sequence belongs to the class-II aminoacyl-tRNA synthetase family. As to quaternary structure, tetramer of two alpha and two beta subunits.

The protein localises to the cytoplasm. The enzyme catalyses tRNA(Gly) + glycine + ATP = glycyl-tRNA(Gly) + AMP + diphosphate. This is Glycine--tRNA ligase alpha subunit from Sulfurihydrogenibium sp. (strain YO3AOP1).